The primary structure comprises 393 residues: MATACPPLSLPSTSLFRGRSARAGPNAGSSRPSAAAPSERRSWRRPRPDGGRAAAGERNQREEVERPPVWLMRQAGRYMKSYQLLCERYPSFRERSENVDLVVEISLQPWKVFKPDGVILFSDILTPLPGMNIPFDIVKGKGPVIYDPLRTAAAVNEVREFVPEEWVPYVGQALNILRQEVKNEAAVLGFVGAPFTLASYCVEGGSSKNFTLIKKMAFSEPAILHNLLQKFTTSMANYIKYQADNGAQAVQIFDSWATELSPADFEEFSLPYLKQIVDSVRETHPDLPLILYASGSGGLLERLPLTGVDVVSLDWTVDMAEGRKRLGSNTAVQGNVDPGVLFGSKEFITRRIYDTVQKAGNVGHVLNLGHGIKVGTPEENVAHFFEVAKGIRY.

Residues 1–64 form a disordered region; sequence MATACPPLSL…AGERNQREEV (64 aa). Residues 23 to 37 are compositionally biased toward low complexity; the sequence is AGPNAGSSRPSAAAP. Over residues 38 to 50 the composition is skewed to basic and acidic residues; sequence SERRSWRRPRPDG. Residues 73–77, Phe92, Ser122, Asp123, Tyr200, Ser255, and His370 contribute to the substrate site; that span reads RQAGR.

It belongs to the uroporphyrinogen decarboxylase family. In terms of assembly, homodimer.

It localises to the plastid. Its subcellular location is the chloroplast. The enzyme catalyses uroporphyrinogen III + 4 H(+) = coproporphyrinogen III + 4 CO2. Its pathway is porphyrin-containing compound metabolism; protoporphyrin-IX biosynthesis; coproporphyrinogen-III from 5-aminolevulinate: step 4/4. Catalyzes the decarboxylation of four acetate groups of uroporphyrinogen-III to yield coproporphyrinogen-III. The protein is Uroporphyrinogen decarboxylase, chloroplastic (LES22) of Zea mays (Maize).